The following is a 66-amino-acid chain: Large ribosomal subunit protein uL29 (66 aa).

The protein belongs to the universal ribosomal protein uL29 family.

The polypeptide is Large ribosomal subunit protein uL29 (Rhizobium meliloti (strain 1021) (Ensifer meliloti)).